The primary structure comprises 214 residues: MEKDLANYRRSYEKGELLERDIPDDPYILFESWFNLADNSKNVEEANAMSISTVGKDLMPKTRVVLLKSFDPDGLYFYTNYDSVKGRDLDENPKCCISFFWPSLEKQIIIQGEVVKVSSKKSEEYFHSRPRGSQLGAHASNQSSVIPSREYLEERLTKLEQKYLKKEIPKPKEWGGFLFKPVAFEFWQGRASRLHDRILFTKKDDNWKIERLAP.

Substrate-binding positions include 9-12 and K68; that span reads RRSY. FMN is bound by residues 63 to 68, 78 to 79, K85, and Q107; these read RVVLLK and YT. 3 residues coordinate substrate: Y125, R129, and S133. FMN is bound by residues 142-143 and W187; that span reads QS. Residue 193–195 participates in substrate binding; that stretch reads RLH. R197 contributes to the FMN binding site.

This sequence belongs to the pyridoxamine 5'-phosphate oxidase family. In terms of assembly, homodimer. FMN serves as cofactor.

The enzyme catalyses pyridoxamine 5'-phosphate + O2 + H2O = pyridoxal 5'-phosphate + H2O2 + NH4(+). The catalysed reaction is pyridoxine 5'-phosphate + O2 = pyridoxal 5'-phosphate + H2O2. Its pathway is cofactor metabolism; pyridoxal 5'-phosphate salvage; pyridoxal 5'-phosphate from pyridoxamine 5'-phosphate: step 1/1. The protein operates within cofactor metabolism; pyridoxal 5'-phosphate salvage; pyridoxal 5'-phosphate from pyridoxine 5'-phosphate: step 1/1. Its function is as follows. Catalyzes the oxidation of either pyridoxine 5'-phosphate (PNP) or pyridoxamine 5'-phosphate (PMP) into pyridoxal 5'-phosphate (PLP). This chain is Pyridoxine/pyridoxamine 5'-phosphate oxidase, found in Christiangramia forsetii (strain DSM 17595 / CGMCC 1.15422 / KT0803) (Gramella forsetii).